The sequence spans 314 residues: tRNA pseudouridine synthase B (314 aa).

Asp54 acts as the Nucleophile in catalysis.

The protein belongs to the pseudouridine synthase TruB family. Type 1 subfamily.

It catalyses the reaction uridine(55) in tRNA = pseudouridine(55) in tRNA. Functionally, responsible for synthesis of pseudouridine from uracil-55 in the psi GC loop of transfer RNAs. The protein is tRNA pseudouridine synthase B of Cupriavidus metallidurans (strain ATCC 43123 / DSM 2839 / NBRC 102507 / CH34) (Ralstonia metallidurans).